The chain runs to 702 residues: ATP-dependent RNA helicase DDX4 (702 aa).

A disordered region spans residues 22-228 (FEKDKYSSGA…YIPPPPPEDE (207 aa)). Residues 29-46 (SGANGDTFNRTSASSDIG) are compositionally biased toward polar residues. Composition is skewed to gly residues over residues 58-68 (GGFGRGKGFGN) and 125-137 (RGSF…GFGL). Polar residues-rich tracts occupy residues 141–150 (NSESDQDQGT) and 195–215 (SGKN…SQGP). 2 positions are modified to phosphoserine: serine 195 and serine 199. The segment at 201-220 (KSETEGGESSDSQGPKVTYI) is interaction with RANBP9. Residues 261-289 (LTFEEANLCQTLNNNIAKAGYTKLTPVQK) carry the Q motif motif. A Helicase ATP-binding domain is found at 292–475 (IPIVLAGRDL…GDFLKSSYLF (184 aa)). Residue 305 to 312 (AQTGSGKT) coordinates ATP. The DEAD box motif lies at 419–422 (DEAD). The Helicase C-terminal domain maps to 503–648 (KLVEILRNIG…DVPAWLEEIA (146 aa)). Residues 681–693 (TLNTAGISSSQAP) are compositionally biased toward polar residues. Residues 681-702 (TLNTAGISSSQAPNPVDDESWD) are disordered. At serine 700 the chain carries Phosphoserine.

The protein belongs to the DEAD box helicase family. DDX4/VASA subfamily. In terms of assembly, found in a mRNP complex, at least composed of TDRD1, TDRD6, TDRD7 and DDX4. Interacts with RANBP9. Interacts with RANBP10. Interacts with PIWIL2 and MAEL. Interacts with BMAL1 and CLOCK. Interacts with Tex19.1 and, probably, Tex19.2. Interacts with RBM46. Testis-specific.

Its subcellular location is the cytoplasm. The protein resides in the perinuclear region. The enzyme catalyses ATP + H2O = ADP + phosphate + H(+). In terms of biological role, ATP-dependent RNA helicase required during spermatogenesis to repress transposable elements and preventing their mobilization, which is essential for the germline integrity. Acts via the piRNA metabolic process, which mediates the repression of transposable elements during meiosis by forming complexes composed of piRNAs and Piwi proteins and governs the methylation and subsequent repression of transposons. Involved in the secondary piRNAs metabolic process, the production of piRNAs in fetal male germ cells through a ping-pong amplification cycle. Required for PIWIL2 slicing-triggered piRNA biogenesis: helicase activity enables utilization of one of the slice cleavage fragments generated by PIWIL2 and processing these pre-piRNAs into piRNAs. The sequence is that of ATP-dependent RNA helicase DDX4 from Mus musculus (Mouse).